A 245-amino-acid polypeptide reads, in one-letter code: 1-(5-phosphoribosyl)-5-[(5-phosphoribosylamino)methylideneamino] imidazole-4-carboxamide isomerase (245 aa).

Aspartate 13 serves as the catalytic Proton acceptor. The Proton donor role is filled by aspartate 132.

The protein belongs to the HisA/HisF family.

The protein resides in the cytoplasm. It catalyses the reaction 1-(5-phospho-beta-D-ribosyl)-5-[(5-phospho-beta-D-ribosylamino)methylideneamino]imidazole-4-carboxamide = 5-[(5-phospho-1-deoxy-D-ribulos-1-ylimino)methylamino]-1-(5-phospho-beta-D-ribosyl)imidazole-4-carboxamide. It functions in the pathway amino-acid biosynthesis; L-histidine biosynthesis; L-histidine from 5-phospho-alpha-D-ribose 1-diphosphate: step 4/9. In Frankia alni (strain DSM 45986 / CECT 9034 / ACN14a), this protein is 1-(5-phosphoribosyl)-5-[(5-phosphoribosylamino)methylideneamino] imidazole-4-carboxamide isomerase.